Consider the following 339-residue polypeptide: Probable E3 ubiquitin-protein ligase BAH1-like 1 (339 aa).

In terms of domain architecture, SPX spans 1–163 (MKFGAIYEEY…GSVSGRDFKS (163 aa)). Residues 235-284 (CPICLDTLFNPYALSCGHLFCKGCACGAASVYIFQGVKSAPPEAKCPVCR) form an RING-type zinc finger.

The protein belongs to the RING-type zinc finger family.

It carries out the reaction S-ubiquitinyl-[E2 ubiquitin-conjugating enzyme]-L-cysteine + [acceptor protein]-L-lysine = [E2 ubiquitin-conjugating enzyme]-L-cysteine + N(6)-ubiquitinyl-[acceptor protein]-L-lysine.. It participates in protein modification; protein ubiquitination. This chain is Probable E3 ubiquitin-protein ligase BAH1-like 1, found in Oryza sativa subsp. indica (Rice).